The chain runs to 331 residues: Ribosomal large subunit pseudouridine synthase D (331 aa).

Residues 25–97 (RRFDAVLAEL…IPLDILYEDE (73 aa)) form the S4 RNA-binding domain. The active site involves Asp145.

Belongs to the pseudouridine synthase RluA family.

It localises to the cytoplasm. It carries out the reaction uridine(1911/1915/1917) in 23S rRNA = pseudouridine(1911/1915/1917) in 23S rRNA. Responsible for synthesis of pseudouridine from uracil at positions 1911, 1915 and 1917 in 23S ribosomal RNA. This chain is Ribosomal large subunit pseudouridine synthase D (rluD), found in Xylella fastidiosa (strain Temecula1 / ATCC 700964).